Here is an 801-residue protein sequence, read N- to C-terminus: Protocadherin beta-8 (801 aa).

An N-terminal signal peptide occupies residues Met1 to Ala29. Residues Glu30 to Leu691 are Extracellular-facing. 5 consecutive Cadherin domains span residues Val36–Phe134, Met139–Phe243, Tyr248–Val348, Phe353–Phe452, and Tyr457–Val562. The cysteines at positions 97 and 103 are disulfide-linked. N-linked (GlcNAc...) asparagine glycosylation is found at Asn419 and Asn437. Asn568 carries an N-linked (GlcNAc...) asparagine glycan. Positions Gly569–Leu672 constitute a Cadherin 6 domain. The helical transmembrane segment at Val692–Val710 threads the bilayer. The Cytoplasmic portion of the chain corresponds to Ala711–Lys801.

In terms of assembly, forms homodimers in trans (molecules expressed by two different cells). Forms promiscuous heterodimers in cis (at the plasma membrane of the same cell) with other protocadherins.

The protein localises to the cell membrane. Its function is as follows. Calcium-dependent cell-adhesion protein involved in cells self-recognition and non-self discrimination. Thereby, it is involved in the establishment and maintenance of specific neuronal connections in the brain. This Homo sapiens (Human) protein is Protocadherin beta-8.